Reading from the N-terminus, the 453-residue chain is Ubiquitin-associated protein 1 (453 aa).

One can recognise a UMA domain in the interval 19–65 (LDDVPFKLNEKFRCPSKVGLPIGFCLSDCNAILSDLQYDFNLERRTV). The segment covering 83–93 (EAIRTDSESER) has biased composition (basic and acidic residues). Disordered regions lie at residues 83 to 119 (EAIR…QDIV), 189 to 223 (LQSQ…AKTG), and 260 to 335 (FPKL…AGTT). Low complexity predominate over residues 189 to 199 (LQSQPQSSVSP). The segment covering 285 to 328 (NLSNGTPPSLQRTASNNNTTLPQEQPVFAQNGTPKQSNPVTVTS) has biased composition (polar residues). 2 UBA domains span residues 340–381 (SPSE…LFTH) and 403–449 (GSEE…LMTR).

Component of an ESCRT-I complex (endosomal sorting complex required for transport I).

Its subcellular location is the cytoplasm. It localises to the cytosol. It is found in the endosome. Functionally, component of the ESCRT-I complex, a regulator of vesicular trafficking process. Binds to ubiquitinated cargo proteins and is required for the sorting of endocytic ubiquitinated cargos into multivesicular bodies (MVBs). In Danio rerio (Zebrafish), this protein is Ubiquitin-associated protein 1.